Reading from the N-terminus, the 175-residue chain is Ribosome maturation factor RimM (175 aa).

The 80-residue stretch at 96–175 (EGDFYWHDLI…TIEVDWDAGF (80 aa)) folds into the PRC barrel domain.

Belongs to the RimM family. In terms of assembly, binds ribosomal protein uS19.

It is found in the cytoplasm. Functionally, an accessory protein needed during the final step in the assembly of 30S ribosomal subunit, possibly for assembly of the head region. Essential for efficient processing of 16S rRNA. May be needed both before and after RbfA during the maturation of 16S rRNA. It has affinity for free ribosomal 30S subunits but not for 70S ribosomes. In Histophilus somni (strain 129Pt) (Haemophilus somnus), this protein is Ribosome maturation factor RimM.